The sequence spans 208 residues: Proheparin-binding EGF-like growth factor (208 aa).

A signal peptide spans 1-23; it reads MKLLPSVVLKLFLAAVFSALVTG. Residues 24-62 constitute a propeptide that is removed on maturation; sequence ESLERLRRGLADGTSNLVSPTESTDQLLPPGGGRGREVL. Over 24–161 the chain is Extracellular; it reads ESLERLRRGL…NRLYTYDHTT (138 aa). Positions 37-49 are enriched in polar residues; the sequence is TSNLVSPTESTDQ. Disordered regions lie at residues 37–57 and 81–104; these read TSNL…GGGR and QALA…LGKK. Thr85 carries an O-linked (GalNAc...) threonine glycan. Basic residues predominate over residues 93 to 102; sequence KRKKKGKGLG. Positions 104-144 constitute an EGF-like domain; sequence KRDPCLRKYKDFCIHGECKYVKELRAPSCICHPGYHGERCH. Intrachain disulfides connect Cys108–Cys121, Cys116–Cys132, and Cys134–Cys143. Positions 149 to 208 are cleaved as a propeptide — C-terminal; sequence PVKNRLYTYDHTTILAVVAVVLSSVCLLVIVGLLMFRYHRRGGYDVENEEKVKLGVTASH. The chain crosses the membrane as a helical span at residues 162–182; it reads ILAVVAVVLSSVCLLVIVGLL. Residues 183 to 208 lie on the Cytoplasmic side of the membrane; the sequence is MFRYHRRGGYDVENEEKVKLGVTASH.

As to quaternary structure, interacts with FBLN1. Interacts with EGFR and ERBB4. Post-translationally, O-glycosylated. In terms of tissue distribution, macrophages, midbrain, cerebellum, hypothalamus, cerebral cortex, bulbourethral gland, lung, heart ventricle, kidney, skin, prostate, seminal vesicle, testis; at low levels in lymph node, thymus, spleen; not detected in pituitary, olfactory bulb, thyroid, duodenum, pancreas, liver, submaxillary gland.

Its subcellular location is the secreted. The protein localises to the extracellular space. It localises to the cell membrane. In terms of biological role, growth factor that mediates its effects via EGFR, ERBB2 and ERBB4. Required for normal cardiac valve formation and normal heart function. Promotes smooth muscle cell proliferation. May be involved in macrophage-mediated cellular proliferation. It is mitogenic for fibroblasts, but not endothelial cells. It is able to bind EGF receptor/EGFR with higher affinity than EGF itself and is a far more potent mitogen for smooth muscle cells than EGF. Also acts as a diphtheria toxin receptor. The protein is Proheparin-binding EGF-like growth factor (HBEGF) of Sus scrofa (Pig).